We begin with the raw amino-acid sequence, 199 residues long: Protein-methionine-sulfoxide reductase heme-binding subunit MsrQ (199 aa).

4 consecutive transmembrane segments (helical) span residues 10–30 (WLKV…FWAI), 82–102 (LWCF…ELGI), 116–136 (PYLT…LTST), and 153–173 (VVYL…KILS).

It belongs to the MsrQ family. Heterodimer of a catalytic subunit (MsrP) and a heme-binding subunit (MsrQ). FMN is required as a cofactor. The cofactor is heme b.

The protein resides in the cell inner membrane. Functionally, part of the MsrPQ system that repairs oxidized periplasmic proteins containing methionine sulfoxide residues (Met-O), using respiratory chain electrons. Thus protects these proteins from oxidative-stress damage caused by reactive species of oxygen and chlorine generated by the host defense mechanisms. MsrPQ is essential for the maintenance of envelope integrity under bleach stress, rescuing a wide series of structurally unrelated periplasmic proteins from methionine oxidation, including the primary periplasmic chaperone SurA and the lipoprotein Pal. MsrQ provides electrons for reduction to the reductase catalytic subunit MsrP, using the quinone pool of the respiratory chain. This chain is Protein-methionine-sulfoxide reductase heme-binding subunit MsrQ, found in Salmonella dublin (strain CT_02021853).